Consider the following 736-residue polypeptide: Oxysterol-binding protein-related protein 9 (736 aa).

Residue alanine 2 is modified to N-acetylalanine. Residues 2 to 99 form the PH domain; it reads ASIMEGPLSK…WIHALEETIL (98 aa). The interval 231-367 is disordered; that stretch reads KSEQRPSSLP…DRDDDAEAGS (137 aa). Residues 253 to 290 show a composition bias toward low complexity; sequence TPTPNSTGSGHSPPSSSLTSPSHVNLSPNTVPEFSYSS. Phosphoserine is present on residues serine 306, serine 324, serine 325, serine 326, and serine 329. 2 stretches are compositionally biased toward polar residues: residues 314–329 and 336–347; these read SSGS…SGNS and TESLNSSLSNGT. A Phosphoserine modification is found at serine 611.

This sequence belongs to the OSBP family. As to quaternary structure, heterodimer with OSBPL11. Interacts with OSBPL10. In terms of tissue distribution, widely expressed.

It localises to the late endosome membrane. The protein localises to the golgi apparatus. It is found in the trans-Golgi network membrane. It carries out the reaction a 1,2-diacyl-sn-glycero-3-phospho-(1D-myo-inositol 4-phosphate)(out) + a 1,2-diacyl-sn-glycero-3-phospho-L-serine(in) = a 1,2-diacyl-sn-glycero-3-phospho-(1D-myo-inositol 4-phosphate)(in) + a 1,2-diacyl-sn-glycero-3-phospho-L-serine(out). Its function is as follows. Interacts with OSBPL11 to function as lipid transfer proteins. Together they form a heterodimer that localizes at the ER-trans-Golgi membrane contact sites, and exchanges phosphatidylserine (1,2-diacyl-sn-glycero-3-phospho-L-serine, PS) for phosphatidylinositol-4-phosphate (1,2-diacyl-sn-glycero-3-phospho-(1D-myo-inositol 4-phosphate), PI(4)P) between the two organelles, a step that is critical for sphingomyelin synthesis in the Golgi complex. The polypeptide is Oxysterol-binding protein-related protein 9 (OSBPL9) (Homo sapiens (Human)).